The chain runs to 507 residues: Xaa-Pro aminopeptidase 3 (507 aa).

The N-terminal 31 residues, 1 to 31, are a transit peptide targeting the mitochondrion; the sequence is MPWLLSAPKLVPAVANVRGLSGCMLCSQRRY. The tract at residues 54 to 79 is interaction with TNFRSF1B; it reads HPHLLRPGEVTPGLSQVEYALRRHKL. Substrate is bound by residues Tyr300, Asp331, Asp342, His424, His431, Glu451, and Glu475. Positions 331, 342, and 424 each coordinate Mn(2+). Residues Glu451 and Glu475 each contribute to the Mn(2+) site.

It belongs to the peptidase M24B family. Homodimer. Isoform 1 interacts with TNFRSF1B/TNFR2 (activated) and TRAF2. Requires Mn(2+) as cofactor. Isoform 1 and isoform 2 are widely expressed, with isoform 1 being more abundant.

Its subcellular location is the mitochondrion. It localises to the cytoplasm. The catalysed reaction is Release of any N-terminal amino acid, including proline, that is linked to proline, even from a dipeptide or tripeptide.. Catalyzes the removal of a penultimate prolyl residue from the N-termini of peptides, such as Leu-Pro-Ala. Also shows low activity towards peptides with Ala or Ser at the P1 position. In terms of biological role, promotes TNFRSF1B-mediated phosphorylation of MAPK8/JNK1 and MAPK9/JNK2, suggesting a function as an adapter protein for TNFRSF1B; the effect is independent of XPNPEP3 peptidase activity. May inhibit apoptotic cell death induced via TNF-TNFRSF1B signaling. The polypeptide is Xaa-Pro aminopeptidase 3 (XPNPEP3) (Homo sapiens (Human)).